The chain runs to 625 residues: Probable potassium transport system protein Kup 2 (625 aa).

The next 12 membrane-spanning stretches (helical) occupy residues 15-35 (LSFA…LYAF), 52-72 (ILSL…LVIV), 98-118 (GGWL…DGML), 134-154 (LSPN…FFLF), 164-184 (IGVY…ILGF), 212-232 (LALF…ALFA), 246-266 (WFAV…ALVL), 284-304 (FLPV…QAII), 336-356 (VYLP…VVIF), 365-385 (AYGI…GIIA), 394-414 (FKIL…AGNI), and 417-437 (LLTG…VMYT).

The protein belongs to the HAK/KUP transporter (TC 2.A.72) family.

The protein localises to the cell inner membrane. The enzyme catalyses K(+)(in) + H(+)(in) = K(+)(out) + H(+)(out). Its function is as follows. Transport of potassium into the cell. Likely operates as a K(+):H(+) symporter. This chain is Probable potassium transport system protein Kup 2, found in Legionella pneumophila (strain Corby).